A 395-amino-acid polypeptide reads, in one-letter code: uncharacterized protein (395 aa).

8 consecutive transmembrane segments (helical) span residues 15-35 (ILAF…VTVF), 56-76 (WPWI…NIII), 86-106 (FHAP…FQIV), 131-151 (AVLL…LITW), 175-195 (WFSF…IFIA), 254-274 (LANI…FAIV), 298-318 (IAIT…TQFV), and 348-368 (VYIP…QVVI).

It is found in the cell membrane. This is an uncharacterized protein from Mycoplasma pneumoniae (strain ATCC 29342 / M129 / Subtype 1) (Mycoplasmoides pneumoniae).